A 280-amino-acid polypeptide reads, in one-letter code: MSATGPFSIGERVQLTDAKGRRYTMSLTPGAEFHTHRGSIAHDAVIGLEQGSVVKSSNGALFLVLRPLLVDYVMSMPRGPQVIYPKDAAQIVHEGDIFPGARVLEAGAGSGALTLSLLRAVGPAGQVISYEQRADHAEHARRNVSGCYGQPPDNWRLVVSDLADSELPDGSVDRAVLDMLAPWEVLDAVSRLLVAGGVLMVYVATVTQLSRIVEALRAKQCWTEPRAWETLQRGWNVVGLAVRPQHSMRGHTAFLVATRRLAPGAVAPAPLGRKREGRDG.

S-adenosyl-L-methionine contacts are provided by residues Ser110–Leu113, Glu131, His136, Asp161, and Asp178.

This sequence belongs to the class I-like SAM-binding methyltransferase superfamily. TRM61 family. In terms of assembly, homotetramer composed of a dimer of dimers.

The catalysed reaction is adenosine(58) in tRNA + S-adenosyl-L-methionine = N(1)-methyladenosine(58) in tRNA + S-adenosyl-L-homocysteine + H(+). Its activity is regulated as follows. Inhibited by Mg(2+). Catalyzes the S-adenosyl-L-methionine-dependent formation of N(1)-methyladenine at position 58 (m1A58) in tRNA. The protein is tRNA (adenine(58)-N(1))-methyltransferase TrmI (trmI) of Mycobacterium tuberculosis (strain ATCC 25618 / H37Rv).